The chain runs to 426 residues: S-adenosylmethionine synthase (426 aa).

His22 serves as a coordination point for ATP. Asp24 provides a ligand contact to Mg(2+). Glu50 lines the K(+) pocket. L-methionine-binding residues include Glu63 and Gln106. The interval 106 to 116 (QSPDISQGVTA) is flexible loop. ATP is bound by residues 181–183 (DGK), 257–258 (KF), Asp266, 272–273 (RK), Ala289, and Lys293. Asp266 serves as a coordination point for L-methionine. Lys297 provides a ligand contact to L-methionine.

The protein belongs to the AdoMet synthase family. As to quaternary structure, homotetramer; dimer of dimers. It depends on Mg(2+) as a cofactor. Requires K(+) as cofactor.

The protein resides in the cytoplasm. The enzyme catalyses L-methionine + ATP + H2O = S-adenosyl-L-methionine + phosphate + diphosphate. It participates in amino-acid biosynthesis; S-adenosyl-L-methionine biosynthesis; S-adenosyl-L-methionine from L-methionine: step 1/1. In terms of biological role, catalyzes the formation of S-adenosylmethionine (AdoMet) from methionine and ATP. The overall synthetic reaction is composed of two sequential steps, AdoMet formation and the subsequent tripolyphosphate hydrolysis which occurs prior to release of AdoMet from the enzyme. The sequence is that of S-adenosylmethionine synthase from Synechocystis sp. (strain ATCC 27184 / PCC 6803 / Kazusa).